The chain runs to 162 residues: ATP synthase subunit b (162 aa).

The helical transmembrane segment at 2–22 threads the bilayer; sequence LEFNATLLAQIVDFIILLIFL.

Belongs to the ATPase B chain family. F-type ATPases have 2 components, F(1) - the catalytic core - and F(0) - the membrane proton channel. F(1) has five subunits: alpha(3), beta(3), gamma(1), delta(1), epsilon(1). F(0) has three main subunits: a(1), b(2) and c(10-14). The alpha and beta chains form an alternating ring which encloses part of the gamma chain. F(1) is attached to F(0) by a central stalk formed by the gamma and epsilon chains, while a peripheral stalk is formed by the delta and b chains.

It is found in the cell membrane. F(1)F(0) ATP synthase produces ATP from ADP in the presence of a proton or sodium gradient. F-type ATPases consist of two structural domains, F(1) containing the extramembraneous catalytic core and F(0) containing the membrane proton channel, linked together by a central stalk and a peripheral stalk. During catalysis, ATP synthesis in the catalytic domain of F(1) is coupled via a rotary mechanism of the central stalk subunits to proton translocation. Functionally, component of the F(0) channel, it forms part of the peripheral stalk, linking F(1) to F(0). This is ATP synthase subunit b from Pelotomaculum thermopropionicum (strain DSM 13744 / JCM 10971 / SI).